We begin with the raw amino-acid sequence, 268 residues long: Glutamate racemase (268 aa).

Substrate contacts are provided by residues 10-11 (DS) and 42-43 (YG). Residue Cys73 is the Proton donor/acceptor of the active site. 74–75 (NT) is a substrate binding site. The active-site Proton donor/acceptor is the Cys184. Position 185–186 (185–186 (TH)) interacts with substrate.

The protein belongs to the aspartate/glutamate racemases family.

The enzyme catalyses L-glutamate = D-glutamate. It functions in the pathway cell wall biogenesis; peptidoglycan biosynthesis. In terms of biological role, provides the (R)-glutamate required for cell wall biosynthesis. The chain is Glutamate racemase from Limosilactobacillus fermentum (strain NBRC 3956 / LMG 18251) (Lactobacillus fermentum).